We begin with the raw amino-acid sequence, 314 residues long: Methionyl-tRNA formyltransferase (314 aa).

110–113 (SLLP) contributes to the (6S)-5,6,7,8-tetrahydrofolate binding site.

Belongs to the Fmt family.

The catalysed reaction is L-methionyl-tRNA(fMet) + (6R)-10-formyltetrahydrofolate = N-formyl-L-methionyl-tRNA(fMet) + (6S)-5,6,7,8-tetrahydrofolate + H(+). Attaches a formyl group to the free amino group of methionyl-tRNA(fMet). The formyl group appears to play a dual role in the initiator identity of N-formylmethionyl-tRNA by promoting its recognition by IF2 and preventing the misappropriation of this tRNA by the elongation apparatus. This Bacillus mycoides (strain KBAB4) (Bacillus weihenstephanensis) protein is Methionyl-tRNA formyltransferase.